A 21-amino-acid chain; its full sequence is Nigrocin-2HSa (21 aa).

The cysteines at positions 15 and 21 are disulfide-linked.

In terms of tissue distribution, expressed by the skin glands.

It localises to the secreted. In terms of biological role, has antibacterial activity against the Gram-positive bacterium S.aureus ATCC 25923 (MIC=56 uM) and the Gram-negative bacterium E.coli ATCC 25726 (MIC=28 uM). In Odorrana hosii (Hose's rock frog), this protein is Nigrocin-2HSa.